Reading from the N-terminus, the 148-residue chain is UPF0756 membrane protein NMA2160 (148 aa).

The next 4 helical transmembrane spans lie at 13–35 (LILL…LLLM), 50–70 (HGLN…LVSG), 80–100 (FLNF…WLAG), and 121–141 (VIGV…AGIL).

The protein belongs to the UPF0756 family.

It localises to the cell membrane. This Neisseria meningitidis serogroup A / serotype 4A (strain DSM 15465 / Z2491) protein is UPF0756 membrane protein NMA2160.